The sequence spans 349 residues: Flagellar P-ring protein (349 aa).

Positions 1–20 (MSKAIKILLPLLLFSLSLQA) are cleaved as a signal peptide.

It belongs to the FlgI family. The basal body constitutes a major portion of the flagellar organelle and consists of four rings (L,P,S, and M) mounted on a central rod.

The protein localises to the periplasm. It localises to the bacterial flagellum basal body. Its function is as follows. Assembles around the rod to form the L-ring and probably protects the motor/basal body from shearing forces during rotation. The chain is Flagellar P-ring protein from Wolinella succinogenes (strain ATCC 29543 / DSM 1740 / CCUG 13145 / JCM 31913 / LMG 7466 / NCTC 11488 / FDC 602W) (Vibrio succinogenes).